Here is a 308-residue protein sequence, read N- to C-terminus: D-alanine--D-alanine ligase (308 aa).

Residues 102–302 form the ATP-grasp domain; that stretch reads KHVAKAAGIP…FGEFLRWMVE (201 aa). 128 to 183 lines the ATP pocket; it reads PMKPPYVVKPVREGSSFGVVIVKEDQSHPPQVITSSDWRYGDRIMVERYVAGREFT. Residues Asp-252, Glu-269, and Asn-271 each coordinate Mg(2+).

It belongs to the D-alanine--D-alanine ligase family. The cofactor is Mg(2+). It depends on Mn(2+) as a cofactor.

It is found in the cytoplasm. The catalysed reaction is 2 D-alanine + ATP = D-alanyl-D-alanine + ADP + phosphate + H(+). It functions in the pathway cell wall biogenesis; peptidoglycan biosynthesis. In terms of biological role, cell wall formation. The polypeptide is D-alanine--D-alanine ligase (Sinorhizobium medicae (strain WSM419) (Ensifer medicae)).